A 316-amino-acid chain; its full sequence is Pantothenate kinase (316 aa).

95–102 serves as a coordination point for ATP; it reads GSVAVGKS.

It belongs to the prokaryotic pantothenate kinase family.

The protein localises to the cytoplasm. It catalyses the reaction (R)-pantothenate + ATP = (R)-4'-phosphopantothenate + ADP + H(+). Its pathway is cofactor biosynthesis; coenzyme A biosynthesis; CoA from (R)-pantothenate: step 1/5. The protein is Pantothenate kinase of Shewanella sp. (strain MR-4).